A 510-amino-acid polypeptide reads, in one-letter code: NAD(P)H-quinone oxidoreductase subunit 2 A, chloroplastic (510 aa).

Helical transmembrane passes span 24–44, 57–77, 99–119, 124–144, 149–169, 183–203, 227–247, 295–315, 323–343, 354–374, 395–415, 418–438, and 482–502; these read LLLF…GLIL, MPWL…ALLF, IFQF…VEYI, MAIT…MFLC, LITI…LSGY, YLLM…WLYG, PGIS…LSPA, WHLL…LIAI, MLAY…IVGD, YMLF…LFGL, ALSL…AGFF, LHLF…IGLL, and LSMI…SPII.

It belongs to the complex I subunit 2 family. In terms of assembly, NDH is composed of at least 16 different subunits, 5 of which are encoded in the nucleus.

It localises to the plastid. The protein localises to the chloroplast thylakoid membrane. The catalysed reaction is a plastoquinone + NADH + (n+1) H(+)(in) = a plastoquinol + NAD(+) + n H(+)(out). The enzyme catalyses a plastoquinone + NADPH + (n+1) H(+)(in) = a plastoquinol + NADP(+) + n H(+)(out). Its function is as follows. NDH shuttles electrons from NAD(P)H:plastoquinone, via FMN and iron-sulfur (Fe-S) centers, to quinones in the photosynthetic chain and possibly in a chloroplast respiratory chain. The immediate electron acceptor for the enzyme in this species is believed to be plastoquinone. Couples the redox reaction to proton translocation, and thus conserves the redox energy in a proton gradient. The chain is NAD(P)H-quinone oxidoreductase subunit 2 A, chloroplastic from Populus trichocarpa (Western balsam poplar).